The sequence spans 864 residues: Mitochondrial 15S rRNA processing factor CCM1 (864 aa).

The transit peptide at 1–76 (MYMARCGPKN…REFSNTLKER (76 aa)) directs the protein to the mitochondrion. Composition is skewed to polar residues over residues 80 to 94 (TKSVNSDGHQSNSIA) and 102 to 112 (NVNVTKTSSVP). A disordered region spans residues 80–117 (TKSVNSDGHQSNSIAPISEDSRNVNVTKTSSVPNEEKS). 2 PPR repeats span residues 319–353 (NKQNLTTVIQFYSRKEMTKQAWNTFDTMKFLSTKH) and 356–390 (DICTYNTMLRICEKERNFPKALDLFQEIQDHNIKP).

Belongs to the CCM1 family. In terms of assembly, binds to mitochondrial small subunit 15S rRNA.

Its subcellular location is the mitochondrion. In terms of biological role, regulates mitochondrial small subunit maturation by controlling 15S rRNA 5'-end processing. Localizes to the 5' precursor of the 15S rRNA in a position that is subsequently occupied by mS47 in the mature yeast mtSSU. Uses structure and sequence-specific RNA recognition, binding to a single-stranded region of the precursor and specifically recognizing bases -6 to -1. The exchange of Ccm1 for mS47 is coupled to the irreversible removal of precursor rRNA that is accompanied by conformational changes of the mitoribosomal proteins uS5m and mS26. These conformational changes signal completion of 5'-end rRNA processing through protection of the mature 5'-end of the 15S rRNA and stabilization of mS47. The removal of the 5' precursor together with the dissociation of Ccm1 may be catalyzed by the 5'-3' exoribonuclease Pet127. Involved in the specific removal of group I introns in mitochondrial encoded transcripts. This Saccharomyces cerevisiae (strain ATCC 204508 / S288c) (Baker's yeast) protein is Mitochondrial 15S rRNA processing factor CCM1.